The following is a 465-amino-acid chain: MAMTGSTPCSSMSSHTKERVTMTKVTLENFYSNLIAQHEEREMRQKKLEKVMEEEGLKDEEKRLRRSAHARKETEFLRLKRTRLGLEDFESLKVIGRGAFGEVRLVQKKDTGHVYAMKILRKADMLEKEQVGHIRAERDILVEADSLWVVKMFYSFQDKLNLYLIMEFLPGGDMMTLLMKKDTLTEEETQFYIAETVLAIDSIHQLGFIHRDIKPDNLLLDSKGHVKLSDFGLCTGLKKAHRTEFYRNLNHSLPSDFTFQNMNSKRKAETWKRNRRQLAFSTVGTPDYIAPEVFMQTGYNKLCDWWSLGVIMYEMLIGYPPFCSETPQETYKKVMNWKETLTFPPEVPISEKAKDLILRFCCEWEHRIGAPGVEEIKNNSFFEGVDWEHIRERPAAISIEIKSIDDTSNFDEFPESDILKPTVATSNHPDTDYKNKDWVFINYTYKRFEGLTARGAIPSYMKAAK.

N-acetylalanine is present on Ala2. Residues 62–87 form an interaction with S100B region; that stretch reads KRLRRSAHARKETEFLRLKRTRLGLE. The residue at position 74 (Thr74) is a Phosphothreonine. Residues 89-382 form the Protein kinase domain; sequence FESLKVIGRG…VEEIKNNSFF (294 aa). Residues 95–103 and Lys118 contribute to the ATP site; that span reads IGRGAFGEV. Asp212 functions as the Proton acceptor in the catalytic mechanism. The residue at position 264 (Ser264) is a Phosphoserine. Ser281 is modified (phosphoserine; by autocatalysis). Positions 306–311 match the UFM1-interacting motif (UFIM) motif; that stretch reads WSLGVI. The 73-residue stretch at 383–455 folds into the AGC-kinase C-terminal domain; the sequence is EGVDWEHIRE…KRFEGLTARG (73 aa). Thr444 carries the post-translational modification Phosphothreonine; by STK24/MST3.

The protein belongs to the protein kinase superfamily. AGC Ser/Thr protein kinase family. In terms of assembly, homodimeric S100B binds two molecules of STK38. Interacts with MOB1 and MOB2. Interacts with MAP3K1 and MAP3K2 (via the kinase domain). Forms a tripartite complex with MOBKL1B and STK3/MST2. Interacts with MICAL1; leading to inhibit the protein kinase activity by antagonizing activation by MST1/STK4. The cofactor is Mg(2+). Post-translationally, ISGylated. Phosphorylated by STK3/MST2 and this is enhanced by MOBKL1B.

The protein localises to the nucleus. It localises to the cytoplasm. Its subcellular location is the chromosome. The catalysed reaction is L-seryl-[protein] + ATP = O-phospho-L-seryl-[protein] + ADP + H(+). It carries out the reaction L-threonyl-[protein] + ATP = O-phospho-L-threonyl-[protein] + ADP + H(+). With respect to regulation, activated by binding of S100B which releases autoinhibitory N-lobe interactions, enabling ATP to bind and the autophosphorylation of Ser-281. Thr-444 then undergoes calcium-dependent phosphorylation by STK24/MST3. Interactions between phosphorylated Thr-444 and the N-lobe promote additional structural changes that complete the activation of the kinase. Autoinhibition is also released by the binding of MOB1/MOBKL1A and MOB2/HCCA2 to the N-terminal of STK38. Functionally, serine/threonine-protein kinase that acts as a negative regulator of MAP3K1/2 signaling. Converts MAP3K2 from its phosphorylated form to its non-phosphorylated form and inhibits autophosphorylation of MAP3K2. Acts as an ufmylation 'reader' in a kinase-independent manner: specifically recognizes and binds mono-ufmylated histone H4 in response to DNA damage, promoting the recruitment of SUV39H1 to the double-strand breaks, resulting in ATM activation. This Bos taurus (Bovine) protein is Serine/threonine-protein kinase 38 (STK38).